We begin with the raw amino-acid sequence, 199 residues long: VAMP-like protein YKT62 (199 aa).

Positions 7 to 131 constitute a Longin domain; the sequence is LVLKCDPETR…PYLKEASDKF (125 aa). A v-SNARE coiled-coil homology domain is found at 139-199; that stretch reads KLLKIQRELD…KKTNSCCTLL (61 aa). Residue C195 is the site of S-palmitoyl cysteine attachment. C196 carries the post-translational modification Cysteine methyl ester. C196 carries the S-geranylgeranyl cysteine lipid modification. Positions 197–199 are cleaved as a propeptide — removed in mature form; that stretch reads TLL.

This sequence belongs to the synaptobrevin family. As to quaternary structure, interacts with SYP41. Core constituent of the SNARE complex required for membrane fusion at the trans-Golgi network.

It is found in the cell membrane. Functionally, involved in the secretory pathway. Essential for membrane fusion mediated by either SYP41 or SYP61; triggers the fusion of phospholipid vesicles containing SYP41 or SYP61 and VTI12. The sequence is that of VAMP-like protein YKT62 from Arabidopsis thaliana (Mouse-ear cress).